Reading from the N-terminus, the 141-residue chain is Nucleoside diphosphate kinase (141 aa).

Positions 11, 59, 87, 93, 104, and 114 each coordinate ATP. Catalysis depends on His117, which acts as the Pros-phosphohistidine intermediate.

It belongs to the NDK family. In terms of assembly, homotetramer. The cofactor is Mg(2+).

The protein localises to the cytoplasm. The catalysed reaction is a 2'-deoxyribonucleoside 5'-diphosphate + ATP = a 2'-deoxyribonucleoside 5'-triphosphate + ADP. It catalyses the reaction a ribonucleoside 5'-diphosphate + ATP = a ribonucleoside 5'-triphosphate + ADP. Major role in the synthesis of nucleoside triphosphates other than ATP. The ATP gamma phosphate is transferred to the NDP beta phosphate via a ping-pong mechanism, using a phosphorylated active-site intermediate. This Paraburkholderia phymatum (strain DSM 17167 / CIP 108236 / LMG 21445 / STM815) (Burkholderia phymatum) protein is Nucleoside diphosphate kinase.